We begin with the raw amino-acid sequence, 491 residues long: 2-aminomuconic 6-semialdehyde dehydrogenase (491 aa).

Catalysis depends on residues E252 and C286.

Belongs to the aldehyde dehydrogenase family. Homotrimer.

The catalysed reaction is 2-aminomuconate 6-semialdehyde + NAD(+) + H2O = (2Z,4E)-2-aminomuconate + NADH + 2 H(+). Its activity is regulated as follows. Strongly inhibited by Ag(+) and Hg(+), and comnpletely inhibited by p-chloromercuribenzoic acid. Involved in the modified meta-cleavage pathway for 2-aminophenol catabolism. The enzyme is also active toward 2-hydroxymuconic 6-semialdehyde, acetaldehyde, propionaldehyde, and butyraldehyde. In Pseudomonas sp, this protein is 2-aminomuconic 6-semialdehyde dehydrogenase (amnC).